Consider the following 476-residue polypeptide: Xylan O-acetyltransferase 4 (476 aa).

The tract at residues 1 to 37 (MTKPQQQSPPSTTATTTTSPPPPPPSTPPPASSSSSS) is disordered. Residues 1–63 (MTKPQQQSPP…SLLSALRRSP (63 aa)) lie on the Cytoplasmic side of the membrane. A compositionally biased stretch (low complexity) spans 8–18 (SPPSTTATTTT). Residues 19 to 31 (SPPPPPPSTPPPA) show a composition bias toward pro residues. The chain crosses the membrane as a helical; Signal-anchor for type II membrane protein span at residues 64–80 (VTTLVAAFFLLALFMYG). Over 81 to 476 (EDVRTLAELS…PSPHPPLPPQ (396 aa)) the chain is Lumenal. Asn-103, Asn-128, and Asn-167 each carry an N-linked (GlcNAc...) asparagine glycan. 4 disulfides stabilise this stretch: Cys-117/Cys-168, Cys-139/Cys-204, Cys-148/Cys-444, and Cys-360/Cys-440. The GDS motif signature appears at 191-193 (GDS). Catalysis depends on Ser-193, which acts as the Nucleophile. 2 N-linked (GlcNAc...) asparagine glycosylation sites follow: Asn-299 and Asn-369. Asp-439 (proton donor) is an active-site residue. Positions 439-442 (DCIH) match the DXXH motif motif. The active-site Proton acceptor is the His-442.

This sequence belongs to the PC-esterase family. TBL subfamily. Highly expressed in leaves. Expressed in roots, stems and inflorescences.

Its subcellular location is the golgi apparatus membrane. Functionally, xylan acetyltransferase required for 2-O- and 3-O-monoacetylation of xylosyl residues in xylan. Catalyzes the 2-O-acetylation of xylan, followed by nonenzymatic acetyl migration to the O-3 position, resulting in products that are monoacetylated at both O-2 and O-3 positions. This Oryza sativa subsp. japonica (Rice) protein is Xylan O-acetyltransferase 4.